Consider the following 69-residue polypeptide: Copper chaperone CopZ (69 aa).

The 67-residue stretch at 2-68 (EQKTLQVEGM…AIEDQGYDVA (67 aa)) folds into the HMA domain. Positions 13 and 16 each coordinate Cu cation.

In terms of assembly, monomer in the absence of copper. Homodimer in the presence of copper ions. Forms a heterodimer (electrostatic interactions) with CopA during the transfer of Cu(+).

It is found in the cytoplasm. Chaperone that serves for the intracellular sequestration and transport of Cu(+). Delivers Cu(+) to the copper-transporting ATPase CopA. Functions in E.coli to transfer Cu(+) to CopA missing its first metal-binding domain. This chain is Copper chaperone CopZ (copZ), found in Bacillus subtilis (strain 168).